The sequence spans 106 residues: N(4)-acetylcytidine amidohydrolase (106 aa).

Residues 9–105 enclose the ASCH domain; it reads TFFEFLTPLI…ELYVIEYELI (97 aa). Lys23 serves as the catalytic Proton acceptor. The active-site Nucleophile is the Thr26. Glu76 acts as the Proton donor in catalysis.

It belongs to the N(4)-acetylcytidine amidohydrolase family.

It catalyses the reaction N(4)-acetylcytidine + H2O = cytidine + acetate + H(+). The enzyme catalyses N(4)-acetyl-2'-deoxycytidine + H2O = 2'-deoxycytidine + acetate + H(+). It carries out the reaction N(4)-acetylcytosine + H2O = cytosine + acetate + H(+). In terms of biological role, catalyzes the hydrolysis of N(4)-acetylcytidine (ac4C). This is N(4)-acetylcytidine amidohydrolase from Vibrio campbellii (strain ATCC BAA-1116).